The chain runs to 394 residues: MVRWLTAGESHGPALVATVEGLPAGIRMTSSDISAELARRRLGHGRGARMSFERDEVELLGGVRHGVTLGGPVSVVVRNTEWPKWERVMSPDPVDPAALAGLGRAAPLTRPRPGHADLAGMQKYGFDDARPVLERASARETAARVALGTAAKALLRQAYGIEVISHVVAIGAVEVPPGVPAPTSLAAVDADPVRCADQATSVRMVAEIDVAHADADTLGGIVEVLAYGCPPGLGSYVHGDRRIDARIAGELMGIQAIKGVEFGDGFTTARRRGSGAHDEIEPAGAGSRRVRRATDRAGGVEGGMTTGEPLRVRVAMKPISSLTRPLSTVDVSTGEAAVAINQRSDVCAVPAAGVVTEAMVALVLADAALEKFGGDSVEETRRNYEGYLKSLVIR.

NADP(+) is bound by residues arginine 40 and arginine 46. Residues 135 to 137 (RAS) and 255 to 256 (QA) each bind FMN. Residues 270 to 291 (RRRGSGAHDEIEPAGAGSRRVR) are disordered. Residues glycine 302, 317 to 321 (KPISS), and arginine 343 contribute to the FMN site.

It belongs to the chorismate synthase family. Homotetramer. The cofactor is FMNH2.

The catalysed reaction is 5-O-(1-carboxyvinyl)-3-phosphoshikimate = chorismate + phosphate. The protein operates within metabolic intermediate biosynthesis; chorismate biosynthesis; chorismate from D-erythrose 4-phosphate and phosphoenolpyruvate: step 7/7. Catalyzes the anti-1,4-elimination of the C-3 phosphate and the C-6 proR hydrogen from 5-enolpyruvylshikimate-3-phosphate (EPSP) to yield chorismate, which is the branch point compound that serves as the starting substrate for the three terminal pathways of aromatic amino acid biosynthesis. This reaction introduces a second double bond into the aromatic ring system. This Frankia casuarinae (strain DSM 45818 / CECT 9043 / HFP020203 / CcI3) protein is Chorismate synthase.